A 279-amino-acid polypeptide reads, in one-letter code: Fatty acid elongase 2 (279 aa).

7 helical membrane-spanning segments follow: residues 16–36 (LMLE…ALVW), 61–81 (AIIV…IVVV), 112–132 (FWIG…MFLL), 138–158 (PPFL…HTYC), 164–184 (MVLF…YFAM), 196–216 (FAPF…LVTT), and 242–262 (MGVI…LNSY). The HxxHH motif signature appears at 142-146 (HWYHH). Catalysis depends on His145, which acts as the Nucleophile.

This sequence belongs to the ELO family.

It localises to the endoplasmic reticulum membrane. The catalysed reaction is an acyl-CoA + malonyl-CoA + H(+) = a 3-oxoacyl-CoA + CO2 + CoA. It participates in lipid metabolism; fatty acid biosynthesis. Functionally, involved in the synthesis of fatty acids. Elongates C10 fatty acids to C14. Required for the maintenance of the global lipidome profile in this parasite. The polypeptide is Fatty acid elongase 2 (Trypanosoma cruzi (strain CL Brener)).